The chain runs to 479 residues: Sulfate adenylyltransferase subunit 1 (479 aa).

In terms of domain architecture, tr-type G spans 25–239 (KSLLRFLTCG…EVLETVDIQR (215 aa)). The interval 34 to 41 (GSVDDGKS) is G1. Residue 34 to 41 (GSVDDGKS) participates in GTP binding. Residues 92–96 (GITID) are G2. The segment at 113–116 (DTPG) is G3. Residues 113 to 117 (DTPGH) and 168 to 171 (NKMD) contribute to the GTP site. The interval 168–171 (NKMD) is G4. A G5 region spans residues 206 to 208 (SAL).

It belongs to the TRAFAC class translation factor GTPase superfamily. Classic translation factor GTPase family. CysN/NodQ subfamily. Heterodimer composed of CysD, the smaller subunit, and CysN.

The enzyme catalyses sulfate + ATP + H(+) = adenosine 5'-phosphosulfate + diphosphate. It participates in sulfur metabolism; hydrogen sulfide biosynthesis; sulfite from sulfate: step 1/3. In terms of biological role, with CysD forms the ATP sulfurylase (ATPS) that catalyzes the adenylation of sulfate producing adenosine 5'-phosphosulfate (APS) and diphosphate, the first enzymatic step in sulfur assimilation pathway. APS synthesis involves the formation of a high-energy phosphoric-sulfuric acid anhydride bond driven by GTP hydrolysis by CysN coupled to ATP hydrolysis by CysD. The protein is Sulfate adenylyltransferase subunit 1 of Salmonella typhi.